The primary structure comprises 1845 residues: Vacuolar membrane-associated protein iml1 (1845 aa).

A compositionally biased stretch (basic residues) spans 1–12 (MSLRGPMKRSHL). Disordered regions lie at residues 1-48 (MSLR…HGQD), 547-566 (PHLS…TAHK), 732-822 (KRRH…GKAP), and 854-982 (SALP…SPQN). Over residues 24–33 (ATSSQAQAQS) the composition is skewed to polar residues. The segment covering 34–47 (HPRDGGPYNDEHGQ) has biased composition (basic and acidic residues). Residues 732-743 (KRRHQRKPSKPK) are compositionally biased toward basic residues. Basic and acidic residues predominate over residues 755-772 (AHERLSARSVLRLREHET). 2 stretches are compositionally biased toward low complexity: residues 801-822 (VPSK…GKAP) and 874-886 (VDSF…ASIS). Over residues 969-982 (NGGSRDSSIKSPQN) the composition is skewed to polar residues. In terms of domain architecture, DEP spans 1344-1419 (GDKGVRMMDR…DGNYFYQISS (76 aa)). Disordered stretches follow at residues 1425 to 1483 (RPES…KNKA) and 1825 to 1845 (NDSV…LNLS).

The protein belongs to the IML1 family.

It is found in the vacuole membrane. The sequence is that of Vacuolar membrane-associated protein iml1 (iml1) from Aspergillus clavatus (strain ATCC 1007 / CBS 513.65 / DSM 816 / NCTC 3887 / NRRL 1 / QM 1276 / 107).